The primary structure comprises 950 residues: Glycine dehydrogenase (decarboxylating) 1 (950 aa).

An N6-(pyridoxal phosphate)lysine modification is found at K704.

Belongs to the GcvP family. In terms of assembly, the glycine cleavage system is composed of four proteins: P, T, L and H. The cofactor is pyridoxal 5'-phosphate.

It carries out the reaction N(6)-[(R)-lipoyl]-L-lysyl-[glycine-cleavage complex H protein] + glycine + H(+) = N(6)-[(R)-S(8)-aminomethyldihydrolipoyl]-L-lysyl-[glycine-cleavage complex H protein] + CO2. The glycine cleavage system catalyzes the degradation of glycine. The P protein binds the alpha-amino group of glycine through its pyridoxal phosphate cofactor; CO(2) is released and the remaining methylamine moiety is then transferred to the lipoamide cofactor of the H protein. The protein is Glycine dehydrogenase (decarboxylating) 1 of Pseudomonas fluorescens (strain Pf0-1).